A 598-amino-acid polypeptide reads, in one-letter code: Fibulin-1 (598 aa).

Intrachain disulfides connect Ala-1–Cys-25, Cys-7–Cys-26, Cys-28–Cys-52, Cys-29–Cys-59, Cys-42–Cys-60, Cys-96–Cys-106, Cys-102–Cys-115, Cys-117–Cys-130, Cys-136–Cys-149, Cys-143–Cys-158, Cys-164–Cys-176, Cys-182–Cys-195, Cys-189–Cys-204, Cys-210–Cys-222, Cys-228–Cys-242, Cys-257–Cys-270, Cys-275–Cys-288, Cys-282–Cys-297, Cys-299–Cys-312, Cys-318–Cys-330, Cys-326–Cys-339, Cys-341–Cys-354, Cys-360–Cys-369, Cys-365–Cys-378, Cys-380–Cys-394, Cys-400–Cys-413, Cys-409–Cys-422, Cys-424–Cys-438, Cys-444–Cys-457, Cys-451–Cys-466, and Cys-471–Cys-483. 2 Anaphylatoxin-like domains span residues 1-27 (ANEQDHCAAPRGDNASLEATFVKRCCH) and 28-60 (CCLLGRAAQAQGQSCEYNLMVGYQCGQVFRACC). Residue Asn-14 is glycosylated (N-linked (GlcNAc...) asparagine). The 40-residue stretch at 92–131 (LNDRCRGGGPCKQQCRDTGDEVVCSCFVGYQLLSDGVSCE) folds into the EGF-like 1 domain. The EGF-like 2; calcium-binding domain maps to 132–177 (DVNECITGSHSCRLGESCINTVGSFRCQRDSSCGTGYELTEDNSCK). The 46-residue stretch at 178-223 (DIDQCESGIHNCLPDFICQNTLGSFRCRPKLQCKNGFIQDALANCI) folds into the EGF-like 3; calcium-binding domain. Positions 224–270 (DINECLSIVSAPCPTGHTCINTEGSYTQKNVPNCGRGYHLNEEGTRC) constitute an EGF-like 4; calcium-binding domain. Residues 271 to 313 (DVNECAPPAEPCGKGHRCVNSPGSFRCECKTGYYFDGISRMCV) form the EGF-like 5; calcium-binding domain. The interval 271–355 (DVNECAPPAE…RLSVDGRSCE (85 aa)) is self-association and FN1-binding. An EGF-like 6; calcium-binding domain is found at 314–355 (DVNECQRYPGRLCGHKCENTLGSYVCSCSVGFRLSVDGRSCE). Residues 356-395 (DINECSSSPCSQECANVYGSYQCYCRRGYQLSDVDGVTCE) enclose the EGF-like 7; calcium-binding domain. An EGF-like 8; calcium-binding domain is found at 396 to 439 (DIDECALPTGGHICSYRCINIPGSFQCSCPASGYRLAPNGRNCQ). The EGF-like 9; calcium-binding domain occupies 440–484 (DIDECVTGIHNCSINETCFNIQGGFRCLAFECPENYRRSAATRCE). N-linked (GlcNAc...) asparagine glycosylation is found at Asn-450 and Asn-454.

This sequence belongs to the fibulin family. Homomultimerizes and interacts with various extracellular matrix components. Interacts with FBLN7. Interacts with the mature/soluble form of DTR. Interacts with CCN3.

It localises to the secreted. Its subcellular location is the extracellular space. The protein resides in the extracellular matrix. In terms of biological role, incorporated into fibronectin-containing matrix fibers. May play a role in cell adhesion and migration along protein fibers within the extracellular matrix (ECM). Could be important for certain developmental processes and contribute to the supramolecular organization of ECM architecture, in particular to those of basement membranes. May serve to anchor the mature/soluble form of DTR to its fibers as it migrates through the extracellular matrix. The direct physical association with DTR may be useful in such tissue developmental processes as wound healing. This Chlorocebus aethiops (Green monkey) protein is Fibulin-1 (FBLN1).